Consider the following 142-residue polypeptide: Large ribosomal subunit protein uL13 (142 aa).

Belongs to the universal ribosomal protein uL13 family. Part of the 50S ribosomal subunit.

This protein is one of the early assembly proteins of the 50S ribosomal subunit, although it is not seen to bind rRNA by itself. It is important during the early stages of 50S assembly. The polypeptide is Large ribosomal subunit protein uL13 (Buchnera aphidicola subsp. Schizaphis graminum (strain Sg)).